Here is a 514-residue protein sequence, read N- to C-terminus: Butyrophilin subfamily 2 member A2 (514 aa).

The first 29 residues, Met-1–Ala-29, serve as a signal peptide directing secretion. The Ig-like V-type domain maps to Gln-30–Met-142. The Extracellular portion of the chain corresponds to Gln-30–Ser-244. 2 N-linked (GlcNAc...) asparagine glycosylation sites follow: Asn-47 and Asn-115. Intrachain disulfides connect Cys-52–Cys-126 and Cys-166–Cys-220. In terms of domain architecture, Ig-like C2-type spans Pro-150–Glu-232. The helical transmembrane segment at Leu-245–Thr-265 threads the bilayer. Residues Ser-266–Pro-514 are Cytoplasmic-facing. Residues Ile-281–Arg-304 are a coiled coil. One can recognise a B30.2/SPRY domain in the interval Ala-295–Ala-488.

Belongs to the immunoglobulin superfamily. BTN/MOG family. Post-translationally, N-glycosylated. In terms of tissue distribution, widely expressed (at protein level). In the thymus, restricted to the corticomedullary junction, but not confined solely to epithelial cells (at protein level). Significant expression on naive B-cells, splenic natural killer cells, dendritic cells and peritoneal macrophages (at protein level). Negligible expression on naive T-cells up-regulated on activated T-cells (at protein level).

It is found in the membrane. Its function is as follows. Inhibits the proliferation of CD4 and CD8 T-cells activated by anti-CD3 antibodies, T-cell metabolism and IL2 and IFNG secretion. The protein is Butyrophilin subfamily 2 member A2 (Btn2a2) of Mus musculus (Mouse).